The sequence spans 313 residues: Cytochrome f (313 aa).

The first 30 residues, 1-30, serve as a signal peptide directing secretion; sequence MRNWSFSKAALTVSLLALSWSPFGPAEVQA. Heme is bound by residues Tyr-31, Cys-51, Cys-54, and His-55. The chain crosses the membrane as a helical span at residues 279-298; the sequence is VQGLIIFFAFVLIAQVFLVL.

This sequence belongs to the cytochrome f family. As to quaternary structure, the 4 large subunits of the cytochrome b6-f complex are cytochrome b6, subunit IV (17 kDa polypeptide, petD), cytochrome f and the Rieske protein, while the 4 small subunits are PetG, PetL, PetM and PetN. The complex functions as a dimer. It depends on heme as a cofactor.

Its subcellular location is the plastid. It is found in the chloroplast thylakoid membrane. Functionally, component of the cytochrome b6-f complex, which mediates electron transfer between photosystem II (PSII) and photosystem I (PSI), cyclic electron flow around PSI, and state transitions. The polypeptide is Cytochrome f (Nephroselmis olivacea (Green alga)).